The chain runs to 107 residues: Large ribosomal subunit protein uL24 (107 aa).

It belongs to the universal ribosomal protein uL24 family. Part of the 50S ribosomal subunit.

Its function is as follows. One of two assembly initiator proteins, it binds directly to the 5'-end of the 23S rRNA, where it nucleates assembly of the 50S subunit. One of the proteins that surrounds the polypeptide exit tunnel on the outside of the subunit. In Caldanaerobacter subterraneus subsp. tengcongensis (strain DSM 15242 / JCM 11007 / NBRC 100824 / MB4) (Thermoanaerobacter tengcongensis), this protein is Large ribosomal subunit protein uL24.